Here is a 505-residue protein sequence, read N- to C-terminus: Histidine ammonia-lyase (505 aa).

The segment at residues 141 to 143 (ASG) is a cross-link (5-imidazolinone (Ala-Gly)). 2,3-didehydroalanine (Ser) is present on serine 142.

Belongs to the PAL/histidase family. In terms of processing, contains an active site 4-methylidene-imidazol-5-one (MIO), which is formed autocatalytically by cyclization and dehydration of residues Ala-Ser-Gly.

The protein localises to the cytoplasm. The catalysed reaction is L-histidine = trans-urocanate + NH4(+). The protein operates within amino-acid degradation; L-histidine degradation into L-glutamate; N-formimidoyl-L-glutamate from L-histidine: step 1/3. This Bacillus cereus (strain G9842) protein is Histidine ammonia-lyase.